Consider the following 215-residue polypeptide: Ras-related protein RAB1BV (215 aa).

GTP is bound by residues 22-29 (GDSGVGKS), 70-74 (DTAGQ), and 128-131 (NKAD). The disordered stretch occupies residues 183-215 (DSDTRQEAQPSITIKPADQSGNQAAAKSACCGS). S-geranylgeranyl cysteine attachment occurs at residues C212 and C213.

The protein belongs to the small GTPase superfamily. Rab family.

It is found in the cell membrane. This Beta vulgaris (Sugar beet) protein is Ras-related protein RAB1BV (RAB1BV).